A 387-amino-acid polypeptide reads, in one-letter code: tRNA N6-adenosine threonylcarbamoyltransferase (387 aa).

His-112 and His-116 together coordinate Fe cation. Residues 134–138, Asp-167, Gly-180, and Asn-325 each bind substrate; that span reads LASGG. Asp-353 contacts Fe cation.

The protein belongs to the KAE1 / TsaD family. It depends on Fe(2+) as a cofactor.

The protein localises to the cytoplasm. It catalyses the reaction L-threonylcarbamoyladenylate + adenosine(37) in tRNA = N(6)-L-threonylcarbamoyladenosine(37) in tRNA + AMP + H(+). Required for the formation of a threonylcarbamoyl group on adenosine at position 37 (t(6)A37) in tRNAs that read codons beginning with adenine. Is involved in the transfer of the threonylcarbamoyl moiety of threonylcarbamoyl-AMP (TC-AMP) to the N6 group of A37, together with TsaE and TsaB. TsaD likely plays a direct catalytic role in this reaction. The polypeptide is tRNA N6-adenosine threonylcarbamoyltransferase (Rickettsia typhi (strain ATCC VR-144 / Wilmington)).